The following is a 276-amino-acid chain: MLTDNRLGEATLSPSIHPTAIIHPQAQLHATVQVGAFSVIGEKVTIGANTVIGPHVVVEGPTEIGTGNRIFPGAVIGCEPQDLKYKGGESWVKIGNDNQIREYVTINRATEEGAVTRIGDRNLLMAYAHVAHNCVIENEVIIANSVALAGHIYIESQARISGVLGVHQFVHIGRLAMVGGMSRIERDVPPFTIVEGNPSRVRSLNLIGLQRSGMSAEDLSALKQAFRLIYRSDTPYQQALEELGRSAAHPYVQHFQCFLQKSSYDQGRRGPIPGKK.

The protein belongs to the transferase hexapeptide repeat family. LpxA subfamily. In terms of assembly, homotrimer.

Its subcellular location is the cytoplasm. It catalyses the reaction a (3R)-hydroxyacyl-[ACP] + UDP-N-acetyl-alpha-D-glucosamine = a UDP-3-O-[(3R)-3-hydroxyacyl]-N-acetyl-alpha-D-glucosamine + holo-[ACP]. The protein operates within glycolipid biosynthesis; lipid IV(A) biosynthesis; lipid IV(A) from (3R)-3-hydroxytetradecanoyl-[acyl-carrier-protein] and UDP-N-acetyl-alpha-D-glucosamine: step 1/6. Its function is as follows. Involved in the biosynthesis of lipid A, a phosphorylated glycolipid that anchors the lipopolysaccharide to the outer membrane of the cell. The sequence is that of Acyl-[acyl-carrier-protein]--UDP-N-acetylglucosamine O-acyltransferase from Synechocystis sp. (strain ATCC 27184 / PCC 6803 / Kazusa).